The sequence spans 458 residues: Paired box protein Pax-8 (458 aa).

A DNA-binding region (paired) is located at residues 18–144; that stretch reads GHGGLNQLGG…SSINRIIRTK (127 aa). A PAI subdomain region spans residues 21–77; it reads GLNQLGGAFVNGRPLPEVVRQRIVDLAHQGVRPCDISRQLRVSHGCVSKILGRYYET. The RED subdomain stretch occupies residues 96–144; it reads KVVEKIGDYKRQNPTMFAWEIRDRLLAEGVCDNDTVPSVSSINRIIRTK. Positions 198-217 are disordered; it reads PGADGKRKLDDSDQESCRLS.

It is found in the nucleus. Probable transcription factor. Involved in kidney development, acting synergistically with lhx1/lim-1 to establish the pronephric primordium in late gastrulae/early neurulae. This chain is Paired box protein Pax-8, found in Xenopus tropicalis (Western clawed frog).